The sequence spans 298 residues: Protein transport protein SEC13-1 (298 aa).

WD repeat units follow at residues 7 to 46 (AHNDLIHDAVLDYYGKKLATCSSDKTIKIFEVEGESHKLV), 51 to 92 (GHEG…WSQI), 97 to 138 (VHTA…TATP), 143 to 196 (AHAI…QSYL), 203 to 245 (GHSD…GPWV), and 253 to 292 (EFPDVLWRASWSLSGNILAISGGDNKVTLWKENLNGKWES).

It belongs to the WD repeat SEC13 family. As to quaternary structure, the COPII coat is composed of at least 5 proteins: the SEC23/24 complex, the SEC13/31 complex, and the protein SAR1. Component of the nuclear pore complex (NPC). NPC constitutes the exclusive means of nucleocytoplasmic transport. NPCs allow the passive diffusion of ions and small molecules and the active, nuclear transport receptor-mediated bidirectional transport of macromolecules such as proteins, RNAs, ribonucleoparticles (RNPs), and ribosomal subunits across the nuclear envelope. Due to its 8-fold rotational symmetry, all subunits are present with 8 copies or multiples thereof.

It is found in the cytoplasmic vesicle. Its subcellular location is the COPII-coated vesicle membrane. The protein resides in the endoplasmic reticulum membrane. It localises to the nucleus. The protein localises to the nuclear pore complex. Functionally, component of the coat protein complex II (COPII) which promotes the formation of transport vesicles from the endoplasmic reticulum (ER). The coat has two main functions, the physical deformation of the endoplasmic reticulum membrane into vesicles and the selection of cargo molecules. It also functions as a component of the nuclear pore complex (NPC). NPC components, collectively referred to as nucleoporins (NUPs), can play the role of both NPC structural components and of docking or interaction partners for transiently associated nuclear transport factors. SEC13 is required for efficient mRNA export from the nucleus to the cytoplasm and for correct nuclear pore biogenesis and distribution. This Candida glabrata (strain ATCC 2001 / BCRC 20586 / JCM 3761 / NBRC 0622 / NRRL Y-65 / CBS 138) (Yeast) protein is Protein transport protein SEC13-1 (SEC131).